The following is a 1214-amino-acid chain: MGVDFDVKTFCHNLRATKPPYECPVETCRKVYKSYSGIEYHLYHYDHDNPPPPQQTPLRKHKKKGRQSRPANKQSPSPSEVSQSPGREVMSYAQAQRMVEVDLHGRVHRISIFDNLDVVSEDEEAPEEAPENGSNKENTETPAATPKSGKHKNKEKRKDSNHHHHHNVSASTTPKLPEVVYRELEQDTPDAPPRPTSYYRYIEKSAEELDEEVEYDMDEEDYIWLDIMNERRKTEGVSPIPQEIFEYLMDRLEKESYFESHNKGDPNALVDEDAVCCICNDGECQNSNVILFCDMCNLAVHQECYGVPYIPEGQWLCRRCLQSPSRAVDCALCPNKGGAFKQTDDGRWAHVVCALWIPEVCFANTVFLEPIDSIEHIPPARWKLTCYICKQRGSGACIQCHKANCYTAFHVTCAQQAGLYMKMEPVRETGANGTSFSVRKTAYCDIHTPPGSARRLPALSHSEGEEDEDEEEDEGKGWSSEKVKKAKAKSRIKMKKARKILAEKRAAAPVVSVPCIPPHRLSKITNRLTIQRKSQFMQRLHSYWTLKRQSRNGVPLLRRLQTHLQSQRNCDQVGRDSEDKNWALKEQLKSWQRLRHDLERARLLVELIRKREKLKRETIKVQQIAMEMQLTPFLILLRKTLEQLQEKDTGNIFSEPVPLSEVPDYLDHIKKPMDFFTMKQNLEAYRYLNFDDFEEDFNLIVSNCLKYNAKDTIFYRAAVRLREQGGAVLRQARRQAEKMGIDFETGMHIPHSLAGDEATHHTEDAAEEERLVLLENQKHLPVEEQLKLLLERLDEVNASKQSVGRSRRAKMIKKEMTALRRKLAHQRETGRDGPERHGPSSRGSLTPHPAACDKDGQTDSAAEESSSQETSKGLGPNMSSTPAHEVGRRTSVLFSKKNPKTAGPPKRPGRPPKNRESQMTPSHGGSPVGPPQLPIMSSLRQRKRGRSPRPSSSSDSDSDKSTEDPPMDLPANGFSGGNQPVKKSFLVYRNDCSLPRSSSDSESSSSSSSSAASDRTSTTPSKQGRGKPSFSRGTFPEDSSEDTSGTENEAYSVGTGRGVGHSMVRKSLGRGAGWLSEDEDSPLDALDLVWAKCRGYPSYPALIIDPKMPREGMFHHGVPIPVPPLEVLKLGEQMTQEAREHLYLVLFFDNKRTWQWLPRTKLVPLGVNQDLDKEKMLEGRKSNIRKSVQIAYHRALQHRSKVQGEQSSETSDSD.

A C2H2-type zinc finger spans residues 21–47 (YECPVETCRKVYKSYSGIEYHLYHYDH). 2 disordered regions span residues 43–87 (YHYD…SPGR) and 118–177 (VVSE…PKLP). Positions 58–67 (LRKHKKKGRQ) are enriched in basic residues. Positions 59 to 222 (RKHKKKGRQS…VEYDMDEEDY (164 aa)) are interaction with KAT6A and KAT6B. Low complexity predominate over residues 74–85 (QSPSPSEVSQSP). Residues 119-130 (VSEDEEAPEEAP) show a composition bias toward acidic residues. At Ser120 the chain carries Phosphoserine. Residue Lys147 is modified to N6-acetyllysine. Residues 148–167 (SGKHKNKEKRKDSNHHHHHN) are compositionally biased toward basic residues. Ser238 carries the phosphoserine modification. The segment at 273-323 (DAVCCICNDGECQNSNVILFCDMCNLAVHQECYGVPYIPEGQWLCRRCLQS) adopts a PHD-type 1 zinc-finger fold. The C2HC pre-PHD-type zinc-finger motif lies at 327-360 (AVDCALCPNKGGAFKQTDDGRWAHVVCALWIPEV). A PHD-type 2 zinc finger spans residues 384-448 (LTCYICKQRG…RKTAYCDIHT (65 aa)). The disordered stretch occupies residues 448–489 (TPPGSARRLPALSHSEGEEDEDEEEDEGKGWSSEKVKKAKAK). Phosphoserine occurs at positions 460 and 462. Over residues 464–474 (GEEDEDEEEDE) the composition is skewed to acidic residues. An interaction with MEAF6 and ING5 region spans residues 501 to 821 (LAEKRAAAPV…IKKEMTALRR (321 aa)). The interval 543 to 1079 (YWTLKRQSRN…RGAGWLSEDE (537 aa)) is required for RUNX1 and RUNX2 transcriptional activation. Lys580 carries the N6-acetyllysine modification. The 105-residue stretch at 628-732 (MQLTPFLILL…EQGGAVLRQA (105 aa)) folds into the Bromo domain. The segment at 819–1062 (LRRKLAHQRE…VGTGRGVGHS (244 aa)) is disordered. Positions 825–838 (HQRETGRDGPERHG) are enriched in basic and acidic residues. The residue at position 858 (Thr858) is a Phosphothreonine. Positions 858 to 871 (TDSAAEESSSQETS) are enriched in low complexity. Ser860, Ser917, Ser922, and Ser926 each carry phosphoserine. The segment covering 993–1021 (SLPRSSSDSESSSSSSSSAASDRTSTTPS) has biased composition (low complexity). Ser1076 is modified (phosphoserine). Residues 1085-1168 (ALDLVWAKCR…RTKLVPLGVN (84 aa)) enclose the PWWP domain. Ser1187 is modified (phosphoserine).

Component of some HBO1 complex composed of KAT7/HBO1, MEAF6, ING5, and BRPF1. Component of the MOZ/MORF complex composed at least of ING5, KAT6A, KAT6B, MEAF6 and one of BRPF1, BRD1/BRPF2 and BRPF3. Interacts (via PHD-type zinc finger domains) with unmethylated histone H3 at 'Lys-4' (H3K4me0). Interacts with trimethylated 'Lys-36' of histone H3 (H3K36me3). Interacts with ING5; interaction directs BRPF1 to H4K4me3-enriched chromatin at the 5' of active genes. Interacts with KAT7. In terms of processing, acetylated by KAT6A. High levels in testis.

The protein localises to the nucleus. It is found in the chromosome. It localises to the cytoplasm. Functionally, scaffold subunit of various histone acetyltransferase (HAT) complexes, such as the MOZ/MORF and HBO1 complexes, which have a histone H3 acetyltransferase activity. Plays a key role in HBO1 complex by directing KAT7/HBO1 specificity towards histone H3 'Lys-14' acetylation (H3K14ac). Some HAT complexes preferentially mediate histone H3 'Lys-23' (H3K23ac) acetylation. Positively regulates the transcription of RUNX1 and RUNX2. The chain is Peregrin from Homo sapiens (Human).